The sequence spans 202 residues: dITP/XTP pyrophosphatase (202 aa).

8–13 (TKNMGK) lines the substrate pocket. Mg(2+)-binding residues include Glu-41 and Asp-70. Asp-70 (proton acceptor) is an active-site residue. Residues Ser-71, 155-158 (FGYD), Lys-178, and 183-184 (HR) contribute to the substrate site.

The protein belongs to the HAM1 NTPase family. Homodimer. Mg(2+) is required as a cofactor.

The catalysed reaction is XTP + H2O = XMP + diphosphate + H(+). It carries out the reaction dITP + H2O = dIMP + diphosphate + H(+). It catalyses the reaction ITP + H2O = IMP + diphosphate + H(+). Pyrophosphatase that catalyzes the hydrolysis of nucleoside triphosphates to their monophosphate derivatives, with a high preference for the non-canonical purine nucleotides XTP (xanthosine triphosphate), dITP (deoxyinosine triphosphate) and ITP. Seems to function as a house-cleaning enzyme that removes non-canonical purine nucleotides from the nucleotide pool, thus preventing their incorporation into DNA/RNA and avoiding chromosomal lesions. This chain is dITP/XTP pyrophosphatase, found in Bacillus anthracis.